Consider the following 125-residue polypeptide: Holo-[acyl-carrier-protein] synthase (125 aa).

Mg(2+)-binding residues include aspartate 8 and glutamate 57.

It belongs to the P-Pant transferase superfamily. AcpS family. Mg(2+) serves as cofactor.

It is found in the cytoplasm. It carries out the reaction apo-[ACP] + CoA = holo-[ACP] + adenosine 3',5'-bisphosphate + H(+). Functionally, transfers the 4'-phosphopantetheine moiety from coenzyme A to a Ser of acyl-carrier-protein. This chain is Holo-[acyl-carrier-protein] synthase, found in Neisseria meningitidis serogroup C (strain 053442).